The primary structure comprises 620 residues: Mitochondrial Rho GTPase 2 (620 aa).

At 1-594 (MRRDVRILLL…ELHPTSFWLR (594 aa)) the chain is on the cytoplasmic side. In terms of domain architecture, Miro 1 spans 2–168 (RRDVRILLLG…FYYAQKAVLH (167 aa)). Residues Gly16, Lys17, Thr18, and Ser19 each coordinate GTP. Thr18 is a binding site for Mg(2+). Residue Asp57 coordinates Mg(2+). Residue Ser59 participates in GTP binding. Residue Lys96 forms a Glycyl lysine isopeptide (Lys-Gly) (interchain with G-Cter in ubiquitin) linkage. Positions 118, 119, 121, 149, and 150 each coordinate GTP. Lys119 is covalently cross-linked (Glycyl lysine isopeptide (Lys-Gly) (interchain with G-Cter in ubiquitin)). Lys164 is covalently cross-linked (Glycyl lysine isopeptide (Lys-Gly) (interchain with G-Cter in ubiquitin)). 2 consecutive EF-hand domains span residues 184-219 (ACAQ…CFGH) and 304-339 (RGYQ…FSGA). Ca(2+) contacts are provided by Asp197, Asp199, Asp201, Glu208, Asp317, Asp319, Asp321, and Glu328. The 164-residue stretch at 415–578 (RSVLMCKVLG…FTQLATMATF (164 aa)) folds into the Miro 2 domain. 5 residues coordinate GTP: Gly427, Gly429, Lys430, Ser431, and Ala432. A Mg(2+)-binding site is contributed by Ser431. Residue Glu473 participates in Mg(2+) binding. The GTP site is built by Lys527, Asp529, and Cys558. The helical; Anchor for type IV membrane protein transmembrane segment at 595-617 (GVLVAVGTAVAAVLSFSLYRVLV) threads the bilayer. Topologically, residues 618–620 (KSR) are mitochondrial intermembrane.

Belongs to the mitochondrial Rho GTPase family. As to quaternary structure, homodimer. Interacts with the kinesin-binding proteins TRAK1/OIP106 and TRAK2/GRIF1, forming a link between mitochondria and the trafficking apparatus of the microtubules. Interacts with ARMCX3. Found in a complex with KIF5B, OGT, RHOT1 and TRAK1. In terms of processing, ubiquitinated by PRKN in a PINK1-dependent manner, leading to its degradation. Ubiquitously expressed.

It localises to the mitochondrion outer membrane. It carries out the reaction GTP + H2O = GDP + phosphate + H(+). It catalyses the reaction ATP + H2O = ADP + phosphate + H(+). The enzyme catalyses UTP + H2O = UDP + phosphate + H(+). Its function is as follows. Atypical mitochondrial nucleoside-triphosphatase (NTPase) involved in mitochondrial trafficking. Probably involved in control of anterograde transport of mitochondria and their subcellular distribution. Can hydrolyze GTP, ATP and UTP. This is Mitochondrial Rho GTPase 2 (Rhot2) from Mus musculus (Mouse).